The primary structure comprises 97 residues: Acylphosphatase (97 aa).

One can recognise an Acylphosphatase-like domain in the interval 3 to 97 (KVKMIVSGRV…PDFTDFNIKY (95 aa)). Catalysis depends on residues arginine 18 and asparagine 36.

It belongs to the acylphosphatase family.

It carries out the reaction an acyl phosphate + H2O = a carboxylate + phosphate + H(+). This Lactococcus lactis subsp. lactis (strain IL1403) (Streptococcus lactis) protein is Acylphosphatase (acyP).